We begin with the raw amino-acid sequence, 88 residues long: Phosphocarrier protein HPr (88 aa).

Residues 1–88 (MKKFQAVIKD…KACLEKNKVI (88 aa)) enclose the HPr domain. Catalysis depends on His-15, which acts as the Pros-phosphohistidine intermediate. Ser-47 carries the post-translational modification Phosphoserine; by HPrK/P.

Belongs to the HPr family.

Its subcellular location is the cytoplasm. Its activity is regulated as follows. Phosphorylation on Ser-47 inhibits the phosphoryl transfer from enzyme I to HPr. Functionally, general (non sugar-specific) component of the phosphoenolpyruvate-dependent sugar phosphotransferase system (sugar PTS). This major carbohydrate active-transport system catalyzes the phosphorylation of incoming sugar substrates concomitantly with their translocation across the cell membrane. The phosphoryl group from phosphoenolpyruvate (PEP) is transferred to the phosphoryl carrier protein HPr by enzyme I. Phospho-HPr then transfers it to the PTS EIIA domain. P-Ser-HPr interacts with the catabolite control protein A (CcpA), forming a complex that binds to DNA at the catabolite response elements cre, operator sites preceding a large number of catabolite-regulated genes. Thus, P-Ser-HPr is a corepressor in carbon catabolite repression (CCR), a mechanism that allows bacteria to coordinate and optimize the utilization of available carbon sources. P-Ser-HPr also plays a role in inducer exclusion, in which it probably interacts with several non-PTS permeases and inhibits their transport activity. The chain is Phosphocarrier protein HPr (ptsH) from Mycoplasma genitalium (strain ATCC 33530 / DSM 19775 / NCTC 10195 / G37) (Mycoplasmoides genitalium).